A 54-amino-acid chain; its full sequence is Movement protein p6 (54 aa).

Topologically, residues 1-10 (MDCVLRSYLL) are lumenal. The chain crosses the membrane as a helical span at residues 11–31 (LAFGFLICLFLFCLVVFIWFV). Over 32 to 54 (YKQILFRTTAQSNEARHNHSTVV) the chain is Cytoplasmic.

As to quaternary structure, homodimer; disulfide-linked.

The protein localises to the host rough endoplasmic reticulum membrane. Its function is as follows. Transports viral genome to neighboring plant cells directly through plasmosdesmata, without any budding. The movement protein allows efficient cell to cell propagation, by bypassing the host cell wall barrier. Two movement proteins, p6, Hsp70h and three structural proteins, CP, CPm, and P64 are essential for cell-cell movement. Also plays a role in virion formation. Together with CPm and p64, encapsidates the 5'-terminal portion of the viral genome. In Beet yellows virus (isolate Ukraine) (BYV), this protein is Movement protein p6.